The sequence spans 213 residues: Cell division protein SepF (213 aa).

The tract at residues 27–103 (VDAPAPRRAP…GSLRGSAPTR (77 aa)) is disordered. 2 stretches are compositionally biased toward basic and acidic residues: residues 35-51 (APVE…RFAD) and 72-90 (DEDR…DRPA).

It belongs to the SepF family. Homodimer. Interacts with FtsZ.

The protein resides in the cytoplasm. In terms of biological role, cell division protein that is part of the divisome complex and is recruited early to the Z-ring. Probably stimulates Z-ring formation, perhaps through the cross-linking of FtsZ protofilaments. Its function overlaps with FtsA. This Mycobacteroides abscessus (strain ATCC 19977 / DSM 44196 / CCUG 20993 / CIP 104536 / JCM 13569 / NCTC 13031 / TMC 1543 / L948) (Mycobacterium abscessus) protein is Cell division protein SepF.